Here is a 1526-residue protein sequence, read N- to C-terminus: MMRWRLAVLFLTLLASTTGDDTTTKASVSTTTKKGTDGPHLTTDDEGFLTVIQGFATQLQCVLNTCSKDVIWYKDGSQISKGSQFLNTTSEKAYKIQHSIEVDYEKGCSGECDDSKPCGDGFSCVDNQCCSCRREEFTLVLRNLTFDESGRYRCQLGNKSELLEFQVEVLESGLKGGFHENISYDHSECCQEKGISPLCRGMCKPSEMDQHHFDPTSCKTDDYKHFLSCATEDGTRSHVHCCKTQLVPSFCYDFCSGDFQMLRRSHRLCLYYLPEIFSCLDRAYLPYPDPPTAIEVNAVEHDKLSVCWKEPEKHESNKMFPILDYAVYFKEIPNFPLLGGDMGLPLLTGDYSDIGDIQEDDYQQEEDDAEEVVKDSTIAPRGKRDVDFESDGVKVQIREKRSTMVIVTRDDVTNSTTIREFAFQNVNTTERCVTLSDLRSSTRYIVYVTARNEYGTSVPSVRNIASTNVHMVKNNASLPDSMKCCTDANVTSFCSSKMCNVAEDPSSFSTITIATTCRAEWPKVSPCIADGRNHTDCCLKKGVQHDCLEICSGSTKELGVHSVLCLNLDLQAIYQCIRQGYETHPSAPGNVTISELTAHSVTVQWTEPNSNAHLVENYTLFIRKNEHGEAVRTVKNVISPHVELGLDPDSEYVLTLQSHSANGTSLPSTAKLFSTLPTTRPPLCTIGEPIYMNDGRVMICDAVNPCPNGFRCTGAGSDLSYCCPHDGTHSSEEFTSCCKEQKMPESCMSSCQYNMTLPESCKENLNTWVQCASEGHDHLRCCLQEEVSKPCQTACMHPFTVPADECFSEVSKYRTCFSAAHQALPAAVRNVEVSSISKDSATISWEDLEANIIVFRVQLFEKGGNLIKTENSSADIFRFIDLEPNKDYSVRVTAINFLGEGPPSWNATFTTKPAQIYEGDRPVAPEKLRISWNSGPRVNVTWDPVSVRRNAEVVTKPIEYTIYYLDTEQSSTWTTLRTNQTWVVMRDLRKDALYYVYVTAKEDNRTSRSSSIITILAQKDSPGLPEPTIVIEPDHKDGVFSPGEKISINCSLPNIKKHLNIDLTVGSHVVQNDHGALWVILETEADEAMDTATCAVSDTDGRQHVAMKHLVLERKASVTMKKDKIRVLDDQSVEIECIYRGGGLDPKISFEKDGKKASRGFLNLKKTEAGYVAKWHIRKVKQEDAGFYKCVVTSSDGSRVEASSEVIFSTETLPVNPKLILQCCEDEGITGDCLQACNIGRTSLSIKNQNCTRFAVSLLKCASDIRDHSDCCIASGVTSKCLPLCSGDSFSPDIDCSEHAVSIMTCSVKSHEHAPSEVSNVRIKASEGKVNIEWDYPLTKDYKYFAVYYRKAHDDHEDWHKLKTIQQNIELDVDPSEDYEVGILAANALGHSRLMYSAIPKDSEPRRSASKGSSSAFWIVVILVVFGVLIAGLAVLSKRRELPYPIGKFIGRRNDPNQPTVAFENPAYGEPWGGAEVEIRGLGGSATTGTAAATQSEWQSANLEANSTTDNSHEYRNGMRYAKLET.

An N-terminal signal peptide occupies residues Met1 to Gly19. The interval Asp20–Pro39 is disordered. The Extracellular segment spans residues Asp20 to Ser1415. Positions Thr24–Lys33 are enriched in low complexity. The region spanning Pro39–Leu170 is the Ig-like C2-type 1 domain. Cys61 and Cys154 form a disulfide bridge. 12 N-linked (GlcNAc...) asparagine glycosylation sites follow: Asn87, Asn143, Asn158, Asn181, Asn414, Asn427, Asn475, Asn489, Asn533, Asn590, Asn617, and Asn662. The region spanning Ala379–His470 is the Fibronectin type-III 1 domain. One can recognise a Fibronectin type-III 2 domain in the interval Ala587–Thr678. Positions Pro682–Pro724 constitute a WR1 domain. Residues Asn754, Asn871, Asn906, Asn939, Asn979, Asn1004, and Asn1049 are each glycosylated (N-linked (GlcNAc...) asparagine). Fibronectin type-III domains follow at residues Ala827 to Ala914 and Ala924 to Asp1020. Residues Ala1116–Ile1207 enclose the Ig-like C2-type 2 domain. Cys1137 and Cys1190 are oxidised to a cystine. Asn1250 is a glycosylation site (N-linked (GlcNAc...) asparagine). Residues Ala1314 to Arg1406 enclose the Fibronectin type-III 5 domain. The chain crosses the membrane as a helical span at residues Ala1416–Leu1436. At Ser1437–Thr1526 the chain is on the cytoplasmic side. The tract at residues Ser1485–Gly1518 is disordered. Polar residues predominate over residues Gln1495–Asp1510.

The protein localises to the cell membrane. This chain is Ig-like and fibronectin type-III domain-containing protein 2, found in Caenorhabditis elegans.